Consider the following 790-residue polypeptide: Cadherin-6 (790 aa).

The signal sequence occupies residues 1-30; that stretch reads MRTYHCFWLLFWAGQPHQSFLTLLSKRTSG. Positions 31-53 are excised as a propeptide; that stretch reads FPEKEKVLVLSGNSRRDLSRSKR. Cadherin domains lie at 54-159, 160-268, 269-383, 384-486, and 487-608; these read SWMW…EPMF, TKDV…PPRF, PQST…PPVF, SRPA…DNAP, and EFAM…LIHP. Over 54–615 the chain is Extracellular; the sequence is SWMWNQFFLL…IHPTGLSTGA (562 aa). N-linked (GlcNAc...) asparagine glycosylation is found at Asn-165 and Asn-255. The tract at residues 261 to 289 is disordered; sequence VNDNPPRFPQSTYQFRAPESTPPDSPIGR. 3 N-linked (GlcNAc...) asparagine glycosylation sites follow: Asn-437, Asn-455, and Asn-536. Residues 616–636 form a helical membrane-spanning segment; sequence LIAILLCIIILLVTVVLFAAL. The Cytoplasmic portion of the chain corresponds to 637–790; the sequence is RRQRKKEPLI…YGSMDSDKDS (154 aa).

The protein resides in the cell membrane. In terms of biological role, cadherins are calcium-dependent cell adhesion proteins. They preferentially interact with themselves in a homophilic manner in connecting cells; cadherins may thus contribute to the sorting of heterogeneous cell types. The polypeptide is Cadherin-6 (CDH6) (Gallus gallus (Chicken)).